The chain runs to 56 residues: Large ribosomal subunit protein bL33 (56 aa).

This sequence belongs to the bacterial ribosomal protein bL33 family.

This Glaesserella parasuis serovar 5 (strain SH0165) (Haemophilus parasuis) protein is Large ribosomal subunit protein bL33.